We begin with the raw amino-acid sequence, 248 residues long: Prepilin leader peptidase/N-methyltransferase (248 aa).

The chain crosses the membrane as a helical span at residues 1-21; that stretch reads MLSILFIFGLILGSFYYTAGC. 4 residues coordinate Zn(2+): Cys-36, Cys-39, Cys-61, and Cys-64. A run of 6 helical transmembrane segments spans residues 68-88, 90-110, 114-134, 143-163, 178-198, and 223-243; these read ISFM…AAGI, FGIS…IIVA, IHFM…LAAA, WYAG…IAAI, VIGF…SVLI, and AIAA…SFYI.

Belongs to the peptidase A24 family. It depends on Zn(2+) as a cofactor.

The protein resides in the cell membrane. The catalysed reaction is Typically cleaves a -Gly-|-Phe- bond to release an N-terminal, basic peptide of 5-8 residues from type IV prepilin, and then N-methylates the new N-terminal amino group, the methyl donor being S-adenosyl-L-methionine.. Functionally, plays a role in type II pseudopili formation by proteolytically removing the leader sequence from substrate proteins and subsequently monomethylating the alpha-amino group of the newly exposed N-terminal phenylalanine. Substrates include proteins required for biogenesis of the type II general secretory apparatus. The chain is Prepilin leader peptidase/N-methyltransferase (comC) from Bacillus subtilis (strain 168).